A 441-amino-acid chain; its full sequence is Damage-control phosphatase ARMT1 (441 aa).

The residue at position 2 (Ala-2) is an N-acetylalanine. Position 40 is an N6-acetyllysine (Lys-40). Ser-102 bears the Phosphoserine mark. Residues Asp-253 and Asn-254 each coordinate Mn(2+). Residue 253–254 (DN) participates in substrate binding. Glu-258 and Asp-291 together coordinate S-adenosyl-L-methionine. Asp-291 contacts Mn(2+). Substrate-binding positions include 367-371 (DLNYR) and Lys-404. The Subfamily III RTxK motif motif lies at 401–404 (RTLK).

Belongs to the damage-control phosphatase family. Sugar phosphate phosphatase III subfamily. Mn(2+) serves as cofactor. Ni(2+) is required as a cofactor. In terms of processing, automethylated.

The catalysed reaction is beta-D-fructose 1-phosphate + H2O = D-fructose + phosphate. It catalyses the reaction beta-D-fructose 6-phosphate = dihydroxyacetone + D-glyceraldehyde 3-phosphate. The enzyme catalyses L-glutamyl-[protein] + S-adenosyl-L-methionine = [protein]-L-glutamate 5-O-methyl ester + S-adenosyl-L-homocysteine. In terms of biological role, metal-dependent phosphatase that shows phosphatase activity against several substrates, including fructose-1-phosphate and fructose-6-phosphate. Its preference for fructose-1-phosphate, a strong glycating agent that causes DNA damage rather than a canonical yeast metabolite, suggests a damage-control function in hexose phosphate metabolism. Has also been shown to have O-methyltransferase activity that methylates glutamate residues of target proteins to form gamma-glutamyl methyl ester residues. Possibly methylates PCNA, suggesting it is involved in the DNA damage response. The polypeptide is Damage-control phosphatase ARMT1 (Bos taurus (Bovine)).